Here is a 271-residue protein sequence, read N- to C-terminus: Mannosyl-3-phosphoglycerate phosphatase (271 aa).

Aspartate 13 serves as the catalytic Nucleophile. 3 residues coordinate Mg(2+): aspartate 13, aspartate 15, and aspartate 214.

Belongs to the HAD-like hydrolase superfamily. MPGP family. The cofactor is Mg(2+).

Its subcellular location is the cytoplasm. It carries out the reaction 2-O-(alpha-D-mannosyl)-3-phosphoglycerate + H2O = (2R)-2-O-(alpha-D-mannosyl)-glycerate + phosphate. This Escherichia coli O6:K15:H31 (strain 536 / UPEC) protein is Mannosyl-3-phosphoglycerate phosphatase (yedP).